Here is a 377-residue protein sequence, read N- to C-terminus: 4-hydroxy-3-methylbut-2-en-1-yl diphosphate synthase (flavodoxin) (377 aa).

4 residues coordinate [4Fe-4S] cluster: C272, C275, C307, and E314.

The protein belongs to the IspG family. The cofactor is [4Fe-4S] cluster.

It carries out the reaction (2E)-4-hydroxy-3-methylbut-2-enyl diphosphate + oxidized [flavodoxin] + H2O + 2 H(+) = 2-C-methyl-D-erythritol 2,4-cyclic diphosphate + reduced [flavodoxin]. Its pathway is isoprenoid biosynthesis; isopentenyl diphosphate biosynthesis via DXP pathway; isopentenyl diphosphate from 1-deoxy-D-xylulose 5-phosphate: step 5/6. Functionally, converts 2C-methyl-D-erythritol 2,4-cyclodiphosphate (ME-2,4cPP) into 1-hydroxy-2-methyl-2-(E)-butenyl 4-diphosphate. In Zymomonas mobilis subsp. mobilis (strain ATCC 31821 / ZM4 / CP4), this protein is 4-hydroxy-3-methylbut-2-en-1-yl diphosphate synthase (flavodoxin).